A 678-amino-acid chain; its full sequence is MRILSYGIVILSLLVFSFIEFGVHARPVVLVLSNDDLNSGGDDNGVGESSDFDEFGESEPKSEEELDPGSWRSIFEPDDSTVQAASPQYYSGLKKILSAASEGNFRLMEEAVDEIEAASSAGDPHAQSIMGFVYGIGMMREKSKSKSFLHHNFAAAGGNMQSKMALAFTYLRQDMHDKAVQLYAELAETAVNSFLISKDSPVVEPTRIHSGTEENKGALRKSRGEEDEDFQILEYQAQKGNANAMYKIGLFYYFGLRGLRRDHTKALHWFLKAVDKGEPRSMELLGEIYARGAGVERNYTKALEWLTLAAKEGLYSAFNGIGYLYVKGYGVDKKNYTKAREYFEKAVDNEDPSGHYNLGVLYLKGIGVNRDVRQATKYFFVAANAGQPKAFYQLAKMFHTGVGLKKNLEMATSFYKLVAERGPWSSLSRWALEAYLKGDVGKALILYSRMAEMGYEVAQSNAAWILDKYGERSMCMGVSGFCTDKERHERAHSLWWRASEQGNEHAALLIGDAYYYGRGTERDFVRAAEAYMHAKSQSNAQAMFNLGYMHEHGQGLPFDLHLAKRYYDESLQSDAAARLPVTLALASLWLRRNYADTVLVRVVDSLPEVYPKVETWIENVVFEEGNATILTLFVCLITILYLRERQRRQVVVVADPVAADVAQPLDADVAQHLAAFPR.

An N-terminal signal peptide occupies residues 1–25 (MRILSYGIVILSLLVFSFIEFGVHA). The disordered stretch occupies residues 40–71 (GGDDNGVGESSDFDEFGESEPKSEEELDPGSW). Sel1-like repeat units lie at residues 124–159 (PHAQSIMGFVYGIGMMREKSKSKSFLHHNFAAAGGN), 242–277 (ANAMYKIGLFYYFGLRGLRRDHTKALHWFLKAVDKG), 279–313 (PRSMELLGEIYARGAGVERNYTKALEWLTLAAKEG), 317–349 (AFNGIGYLYVKGYGVDKKNYTKAREYFEKAVDN), 353–386 (SGHYNLGVLYLKGIGVNRDVRQATKYFFVAANAG), 388–422 (PKAFYQLAKMFHTGVGLKKNLEMATSFYKLVAERG), 506–537 (AALLIGDAYYYGRGTERDFVRAAEAYMHAKSQ), and 540–568 (AQAMFNLGYMHEHGQGLPFDLHLAKRYYD). N-linked (GlcNAc...) asparagine glycans are attached at residues asparagine 298 and asparagine 335. The helical transmembrane segment at 620–640 (VVFEEGNATILTLFVCLITIL) threads the bilayer.

This sequence belongs to the sel-1 family. In terms of assembly, interacts with OS9.

Its subcellular location is the endoplasmic reticulum membrane. Its function is as follows. Component of the endoplasmic reticulum (ER) quality control system called ER-associated degradation (ERAD) and involved in ubiquitin-dependent degradation of misfolded endoplasmic reticulum proteins. Functions as an ERAD substrate-recruiting factor that recognizes misfolded proteins for the HRD1 E3 ubiquitin ligase complex. Targets the misfolded LRR receptor kinase BRI1. The chain is ERAD-associated E3 ubiquitin-protein ligase component HRD3A from Arabidopsis thaliana (Mouse-ear cress).